A 110-amino-acid polypeptide reads, in one-letter code: Large ribosomal subunit protein uL22 (110 aa).

This sequence belongs to the universal ribosomal protein uL22 family. In terms of assembly, part of the 50S ribosomal subunit.

Functionally, this protein binds specifically to 23S rRNA; its binding is stimulated by other ribosomal proteins, e.g. L4, L17, and L20. It is important during the early stages of 50S assembly. It makes multiple contacts with different domains of the 23S rRNA in the assembled 50S subunit and ribosome. The globular domain of the protein is located near the polypeptide exit tunnel on the outside of the subunit, while an extended beta-hairpin is found that lines the wall of the exit tunnel in the center of the 70S ribosome. This Chromohalobacter salexigens (strain ATCC BAA-138 / DSM 3043 / CIP 106854 / NCIMB 13768 / 1H11) protein is Large ribosomal subunit protein uL22.